The following is a 427-amino-acid chain: BSD domain-containing protein 1 (427 aa).

Ser92 and Ser166 each carry phosphoserine. A BSD domain is found at 146–198 (WLSEFCLEEKKGEISELLVGSPSIRALYTKMVPAAVSHSEFWHRYFYKVHQLE). Residues 208-397 (KQRADQSISE…ISEDWEKDFD (190 aa)) form a disordered region. Residues 219–229 (PGWEEEEEELE) show a composition bias toward acidic residues. The span at 236–245 (KEAKIPKETK) shows a compositional bias: basic and acidic residues. A compositionally biased stretch (low complexity) spans 268-279 (PAEATPSESSES). A compositionally biased stretch (pro residues) spans 324–333 (GPPPPPPSKP). Basic and acidic residues predominate over residues 347-364 (PPARVETLREEVPTDLRV). A Phosphothreonine modification is found at Thr353. A compositionally biased stretch (polar residues) spans 368-387 (NSDSGKSTPSNNGKKGSSTD). Residues Ser384 and Ser385 each carry the phosphoserine modification. A compositionally biased stretch (acidic residues) spans 388–397 (ISEDWEKDFD). A Phosphoserine modification is found at Ser415.

This Mus musculus (Mouse) protein is BSD domain-containing protein 1 (Bsdc1).